The chain runs to 347 residues: Spermidine/putrescine import ATP-binding protein PotA (347 aa).

The 231-residue stretch at 6–236 folds into the ABC transporter domain; that stretch reads IELRDISKHY…PKNSFVAKFI (231 aa). Residue 38-45 participates in ATP binding; the sequence is GPSGCGKT.

The protein belongs to the ABC transporter superfamily. Spermidine/putrescine importer (TC 3.A.1.11.1) family. In terms of assembly, the complex is composed of two ATP-binding proteins (PotA), two transmembrane proteins (PotB and PotC) and a solute-binding protein (PotD).

The protein localises to the cell membrane. It catalyses the reaction ATP + H2O + polyamine-[polyamine-binding protein]Side 1 = ADP + phosphate + polyamineSide 2 + [polyamine-binding protein]Side 1.. In terms of biological role, part of the ABC transporter complex PotABCD involved in spermidine/putrescine import. Responsible for energy coupling to the transport system. In Clostridioides difficile (strain 630) (Peptoclostridium difficile), this protein is Spermidine/putrescine import ATP-binding protein PotA.